The sequence spans 181 residues: CDP-archaeol synthase (181 aa).

5 helical membrane-spanning segments follow: residues 7–27, 55–75, 88–108, 126–146, and 147–167; these read VVWALWAMLPAYIPNNAAVLA, LIGTAAGTALALGLTQVTPSV, LRAGLGLAFGAMLGDIGASFL, LDFVVGALLCAFVAAPSWFTE, and TFTLPVLVVVVVATPVLHVVT.

It belongs to the CDP-archaeol synthase family. It depends on Mg(2+) as a cofactor.

The protein resides in the cell membrane. The catalysed reaction is 2,3-bis-O-(geranylgeranyl)-sn-glycerol 1-phosphate + CTP + H(+) = CDP-2,3-bis-O-(geranylgeranyl)-sn-glycerol + diphosphate. It functions in the pathway membrane lipid metabolism; glycerophospholipid metabolism. Functionally, catalyzes the formation of CDP-2,3-bis-(O-geranylgeranyl)-sn-glycerol (CDP-archaeol) from 2,3-bis-(O-geranylgeranyl)-sn-glycerol 1-phosphate (DGGGP) and CTP. This reaction is the third ether-bond-formation step in the biosynthesis of archaeal membrane lipids. This is CDP-archaeol synthase from Haloarcula marismortui (strain ATCC 43049 / DSM 3752 / JCM 8966 / VKM B-1809) (Halobacterium marismortui).